Here is a 402-residue protein sequence, read N- to C-terminus: Elongation factor Tu (402 aa).

A tr-type G domain is found at 16–211 (KEHINIGTIG…AVDSYIDSPV (196 aa)). Residues 25–32 (GHVDHGKT) are G1. A GTP-binding site is contributed by 25–32 (GHVDHGKT). Threonine 32 provides a ligand contact to Mg(2+). The segment at 66–70 (GITIN) is G2. Residues 87–90 (DCPG) are G3. GTP is bound by residues 87–91 (DCPGH) and 142–145 (NKID). Positions 142–145 (NKID) are G4. The interval 181–183 (SAR) is G5.

It belongs to the TRAFAC class translation factor GTPase superfamily. Classic translation factor GTPase family. EF-Tu/EF-1A subfamily. Monomer.

Its subcellular location is the cytoplasm. It catalyses the reaction GTP + H2O = GDP + phosphate + H(+). GTP hydrolase that promotes the GTP-dependent binding of aminoacyl-tRNA to the A-site of ribosomes during protein biosynthesis. This Mesomycoplasma hyopneumoniae (strain J / ATCC 25934 / NCTC 10110) (Mycoplasma hyopneumoniae) protein is Elongation factor Tu.